We begin with the raw amino-acid sequence, 599 residues long: Chaperone protein DnaK (599 aa).

Thr-187 is subject to Phosphothreonine; by autocatalysis. The disordered stretch occupies residues 575 to 599 (AQQAATENSKDSDTVEAEIVDDKAN).

This sequence belongs to the heat shock protein 70 family.

Acts as a chaperone. The chain is Chaperone protein DnaK from Mycoplasmopsis pulmonis (strain UAB CTIP) (Mycoplasma pulmonis).